An 86-amino-acid polypeptide reads, in one-letter code: Large ribosomal subunit protein bL31B (86 aa).

It belongs to the bacterial ribosomal protein bL31 family. Type B subfamily. As to quaternary structure, part of the 50S ribosomal subunit.

The chain is Large ribosomal subunit protein bL31B from Burkholderia cenocepacia (strain ATCC BAA-245 / DSM 16553 / LMG 16656 / NCTC 13227 / J2315 / CF5610) (Burkholderia cepacia (strain J2315)).